A 101-amino-acid polypeptide reads, in one-letter code: Phosphoribosyl-AMP cyclohydrolase (101 aa).

Asp71 contributes to the Mg(2+) binding site. Zn(2+) is bound at residue Cys72. Mg(2+)-binding residues include Asp73 and Asp75. Zn(2+) contacts are provided by Cys88 and Cys95.

Belongs to the PRA-CH family. Homodimer. Mg(2+) serves as cofactor. Zn(2+) is required as a cofactor.

Its subcellular location is the cytoplasm. The catalysed reaction is 1-(5-phospho-beta-D-ribosyl)-5'-AMP + H2O = 1-(5-phospho-beta-D-ribosyl)-5-[(5-phospho-beta-D-ribosylamino)methylideneamino]imidazole-4-carboxamide. It functions in the pathway amino-acid biosynthesis; L-histidine biosynthesis; L-histidine from 5-phospho-alpha-D-ribose 1-diphosphate: step 3/9. In terms of biological role, catalyzes the hydrolysis of the adenine ring of phosphoribosyl-AMP. The polypeptide is Phosphoribosyl-AMP cyclohydrolase (Bacillus cereus (strain G9842)).